The chain runs to 277 residues: Small ribosomal subunit protein uS3 (277 aa).

The KH type-2 domain maps to 38–106 (IRRLLATGLE…QVQLNILEVK (69 aa)). The tract at residues 217 to 277 (AGVEAGRGAP…SAPSAETTES (61 aa)) is disordered. The segment covering 225–235 (APDRPRRERPA) has biased composition (basic and acidic residues). A compositionally biased stretch (low complexity) spans 242-261 (SGSSGTTATSTEAGRAAAET).

This sequence belongs to the universal ribosomal protein uS3 family. Part of the 30S ribosomal subunit. Forms a tight complex with proteins S10 and S14.

In terms of biological role, binds the lower part of the 30S subunit head. Binds mRNA in the 70S ribosome, positioning it for translation. In Mycobacteroides abscessus (strain ATCC 19977 / DSM 44196 / CCUG 20993 / CIP 104536 / JCM 13569 / NCTC 13031 / TMC 1543 / L948) (Mycobacterium abscessus), this protein is Small ribosomal subunit protein uS3.